A 404-amino-acid chain; its full sequence is UPF0674 endoplasmic reticulum membrane protein YNR021W (404 aa).

The residue at position 2 (Ser-2) is an N-acetylserine. An N-linked (GlcNAc...) asparagine glycan is attached at Asn-44. The chain crosses the membrane as a helical span at residues 49–68; it reads LCALGVLFLVYAFYKFGNSV. N-linked (GlcNAc...) asparagine glycosylation occurs at Asn-98. Positions 369 to 404 are disordered; it reads AKRRQLKASGQQEKVDQKMKEKRERRLKNKQRTRFQ. Positions 381–392 are enriched in basic and acidic residues; sequence EKVDQKMKEKRE. Residues 393-404 show a composition bias toward basic residues; that stretch reads RRLKNKQRTRFQ.

This sequence belongs to the UPF0674 family.

Its subcellular location is the endoplasmic reticulum membrane. This Saccharomyces cerevisiae (strain ATCC 204508 / S288c) (Baker's yeast) protein is UPF0674 endoplasmic reticulum membrane protein YNR021W.